Here is a 132-residue protein sequence, read N- to C-terminus: Small ribosomal subunit protein uS8 (132 aa).

It belongs to the universal ribosomal protein uS8 family. In terms of assembly, part of the 30S ribosomal subunit. Contacts proteins S5 and S12.

One of the primary rRNA binding proteins, it binds directly to 16S rRNA central domain where it helps coordinate assembly of the platform of the 30S subunit. The sequence is that of Small ribosomal subunit protein uS8 from Staphylococcus aureus (strain USA300).